A 100-amino-acid polypeptide reads, in one-letter code: Integration host factor subunit beta (100 aa).

The interval Leu-53–Ser-100 is disordered. The segment covering Pro-82 to Asn-91 has biased composition (basic and acidic residues).

Belongs to the bacterial histone-like protein family. In terms of assembly, heterodimer of an alpha and a beta chain.

Its function is as follows. This protein is one of the two subunits of integration host factor, a specific DNA-binding protein that functions in genetic recombination as well as in transcriptional and translational control. The protein is Integration host factor subunit beta of Alkalilimnicola ehrlichii (strain ATCC BAA-1101 / DSM 17681 / MLHE-1).